The sequence spans 526 residues: Probable inorganic phosphate transporter 1-3 (526 aa).

At 1–21 (MADGQLKVLTTLDHARTQWYH) the chain is on the cytoplasmic side. A helical transmembrane segment spans residues 22–42 (FMAIVIAGMGFFTDAYDLFCI). Residues 43–70 (SLVSKLLGRIYYTDLAGDNPGSLPPNVS) are Extracellular-facing. A helical membrane pass occupies residues 71–91 (AAVNGVALCGTLAGQLFFGWL). Residues 92-99 (GDKLGRKS) lie on the Cytoplasmic side of the membrane. A helical membrane pass occupies residues 100–120 (VYGFTLVLMVVCSVASGLSFG). At 121-124 (RTAK) the chain is on the extracellular side. The chain crosses the membrane as a helical span at residues 125-145 (GVVATLCFFRFWLGFGIGGDY). The Cytoplasmic portion of the chain corresponds to 146–163 (PLSATIMSEYANKRTRGA). A helical transmembrane segment spans residues 164–184 (FIAAVFAMQGFGILFGAIVAL). The Extracellular portion of the chain corresponds to 185-211 (VVSAGFRNAYPAPSYADGRAASLVPEA). Residues 212 to 232 (DYVWRIILMFGTVPAALTYYW) traverse the membrane as a helical segment. The Cytoplasmic segment spans residues 233 to 294 (RMKMPETARY…GLFSRQFVRR (62 aa)). Residues 295-315 (HGVHLVATTSTWFLLDIAFYS) form a helical membrane-spanning segment. At 316 to 349 (QNLFQKDIFSKVGWIPPARTMNAVEEVFRIARAQ) the chain is on the extracellular side. A helical transmembrane segment spans residues 350–370 (ALIALCGTIPGYWFTVAFIDV). Topologically, residues 371–373 (AGR) are cytoplasmic. A helical transmembrane segment spans residues 374–394 (FAIQLMGFAMMTVFMLGLAAP). Over 395–407 (YHHWTTPGNHTGF) the chain is Extracellular. The helical transmembrane segment at 408–428 (VVMYGFTFFFANFGPNATTFI) threads the bilayer. Over 429–444 (VPAEIYPARLRSTCHG) the chain is Cytoplasmic. The helical transmembrane segment at 445–465 (ISAAAGKAGAIVGAFGFLYAA) threads the bilayer. At 466–483 (QDPHKPEAGYKPGIGIRN) the chain is on the extracellular side. A helical transmembrane segment spans residues 484 to 504 (ALFVLAGTNFLGMLMTLLVPE). Topologically, residues 505 to 526 (SKGMSLEEVSKENVADDEEATA) are cytoplasmic.

It belongs to the major facilitator superfamily. Phosphate:H(+) symporter (TC 2.A.1.9) family. Expressed at low levels in roots.

It is found in the membrane. In terms of biological role, high-affinity transporter for external inorganic phosphate. The polypeptide is Probable inorganic phosphate transporter 1-3 (PHT1-3) (Oryza sativa subsp. japonica (Rice)).